A 579-amino-acid chain; its full sequence is GPI alpha-1,2-mannosyltransferase 4 (579 aa).

The next 8 helical transmembrane spans lie at Leu-131 to Met-151, Trp-156 to Thr-173, Ile-180 to Pro-200, Leu-216 to Val-236, Ala-258 to Trp-278, Tyr-369 to Ala-389, Phe-391 to Pro-411, and Val-416 to Val-436.

This sequence belongs to the glycosyltransferase 22 family. PIGZ subfamily. As to expression, widely expressed at low level, with highest level in brain and colon.

Its subcellular location is the endoplasmic reticulum membrane. It participates in glycolipid biosynthesis; glycosylphosphatidylinositol-anchor biosynthesis. In terms of biological role, alpha-1,2-mannosyltransferase that catalyzes the transfer of the fourth mannose, via an alpha-1,2 bond, from a dolichol-phosphate-mannose (Dol-P-Man) to an alpha-D-Man-(1-&gt;2)-alpha-D-Man-(1-&gt;6)-2-PEtn-alpha-D-Man-(1-&gt;4)-alpha-D-GlcN-(1-&gt;6)-(1-radyl,2-acyl-sn-glycero-3-phospho)-2-acyl-inositol (also termed H6) intermediate and participates in the twelfth step of the glycosylphosphatidylinositol-anchor biosynthesis. The presence of a fourth mannose in GPI is facultative, suggesting that it only exists in some tissues. The sequence is that of GPI alpha-1,2-mannosyltransferase 4 from Homo sapiens (Human).